The primary structure comprises 377 residues: Succinyl-diaminopimelate desuccinylase (377 aa).

His75 serves as a coordination point for Zn(2+). Asp77 is a catalytic residue. Residue Asp106 coordinates Zn(2+). Glu136 serves as the catalytic Proton acceptor. The Zn(2+) site is built by Glu137, Glu165, and His350.

The protein belongs to the peptidase M20A family. DapE subfamily. Homodimer. Requires Zn(2+) as cofactor. Co(2+) serves as cofactor.

The catalysed reaction is N-succinyl-(2S,6S)-2,6-diaminopimelate + H2O = (2S,6S)-2,6-diaminopimelate + succinate. The protein operates within amino-acid biosynthesis; L-lysine biosynthesis via DAP pathway; LL-2,6-diaminopimelate from (S)-tetrahydrodipicolinate (succinylase route): step 3/3. In terms of biological role, catalyzes the hydrolysis of N-succinyl-L,L-diaminopimelic acid (SDAP), forming succinate and LL-2,6-diaminopimelate (DAP), an intermediate involved in the bacterial biosynthesis of lysine and meso-diaminopimelic acid, an essential component of bacterial cell walls. The sequence is that of Succinyl-diaminopimelate desuccinylase from Sphingopyxis alaskensis (strain DSM 13593 / LMG 18877 / RB2256) (Sphingomonas alaskensis).